The following is a 1025-amino-acid chain: Glycine dehydrogenase (decarboxylating), mitochondrial (1025 aa).

The N-terminal 35 residues, 1–35, are a transit peptide targeting the mitochondrion; sequence MQLCARAWGLRLGRGAGGGHRLARGTGLSWAQRSR. A disordered region spans residues 16–51; sequence AGGGHRLARGTGLSWAQRSRDSSGGGGGGGGGDRGA. Positions 38-50 are enriched in gly residues; sequence SGGGGGGGGGDRG. N6-acetyllysine is present on residues lysine 452, lysine 519, lysine 653, and lysine 669. Lysine 759 is modified (N6-(pyridoxal phosphate)lysine).

This sequence belongs to the GcvP family. In terms of assembly, interacts with GCSH. Homodimer. The glycine cleavage system is composed of four proteins: P (GLDC), T (GCST), L (DLD) and H (GCSH). The cofactor is pyridoxal 5'-phosphate.

Its subcellular location is the mitochondrion. It catalyses the reaction N(6)-[(R)-lipoyl]-L-lysyl-[glycine-cleavage complex H protein] + glycine + H(+) = N(6)-[(R)-S(8)-aminomethyldihydrolipoyl]-L-lysyl-[glycine-cleavage complex H protein] + CO2. Its activity is regulated as follows. Stimulated by lipoic acid. Inhibited in presence of methylamine. The glycine cleavage system catalyzes the degradation of glycine. The P protein (GLDC) binds the alpha-amino group of glycine through its pyridoxal phosphate cofactor; CO(2) is released and the remaining methylamine moiety is then transferred to the lipoamide cofactor of the H protein (GCSH). The polypeptide is Glycine dehydrogenase (decarboxylating), mitochondrial (Mus musculus (Mouse)).